We begin with the raw amino-acid sequence, 177 residues long: Probable chemoreceptor glutamine deamidase CheD (177 aa).

It belongs to the CheD family.

The enzyme catalyses L-glutaminyl-[protein] + H2O = L-glutamyl-[protein] + NH4(+). Functionally, probably deamidates glutamine residues to glutamate on methyl-accepting chemotaxis receptors (MCPs), playing an important role in chemotaxis. This Pseudomonas syringae pv. syringae (strain B728a) protein is Probable chemoreceptor glutamine deamidase CheD.